The sequence spans 122 residues: Large ribosomal subunit protein uL14 (122 aa).

It belongs to the universal ribosomal protein uL14 family. As to quaternary structure, part of the 50S ribosomal subunit. Forms a cluster with proteins L3 and L19. In the 70S ribosome, L14 and L19 interact and together make contacts with the 16S rRNA in bridges B5 and B8.

Functionally, binds to 23S rRNA. Forms part of two intersubunit bridges in the 70S ribosome. The protein is Large ribosomal subunit protein uL14 of Campylobacter fetus subsp. fetus (strain 82-40).